A 487-amino-acid chain; its full sequence is Histamine H1 receptor (487 aa).

Topologically, residues 1 to 29 (MSLPNSSCLLEDKMCEGNKTTMASPQLMP) are extracellular. N-linked (GlcNAc...) asparagine glycans are attached at residues Asn5 and Asn18. The helical transmembrane segment at 30-50 (LVVVLSTICLVTVGLNLLVLY) threads the bilayer. Topologically, residues 51–64 (AVRSERKLHTVGNL) are cytoplasmic. Residues 65–89 (YIVSLSVADLIVGAVVMPMNILYLL) traverse the membrane as a helical segment. Topologically, residues 90-97 (MSKWSLGR) are extracellular. Residues 98-123 (PLCLFWLSMDYVASTASIFSVFILCI) traverse the membrane as a helical segment. A disulfide bond links Cys100 and Cys180. Histamine-binding residues include Asp107 and Thr112. Residues 107 to 112 (DYVAST) form an important for agonist binding region. The Cytoplasmic portion of the chain corresponds to 124–144 (DRYRSVQQPLRYLKYRTKTRA). Thr140 and Thr142 each carry phosphothreonine. Residues 145–164 (SATILGAWFLSFLWVIPILG) traverse the membrane as a helical segment. The Extracellular portion of the chain corresponds to 165–188 (WNHFMQQTSVRREDKCETDFYDVT). The helical transmembrane segment at 189-211 (WFKVMTAIINFYLPTLLMLWFYA) threads the bilayer. Residue Asn198 participates in histamine binding. Residues 212–416 (KIYKAVRQHC…MNRERKAAKQ (205 aa)) lie on the Cytoplasmic side of the membrane. The residue at position 230 (Ser230) is a Phosphoserine. Over residues 238–261 (KLRPENPKGDAKKPGKESPWEVLK) the composition is skewed to basic and acidic residues. A disordered region spans residues 238 to 291 (KLRPENPKGDAKKPGKESPWEVLKRKPKDAGGGSVLKSPSQTPKEMKSPVVFSQ). Phosphothreonine is present on Thr279. Phosphoserine is present on residues Ser344 and Ser347. The tract at residues 345-379 (EISEDQMLGDSQSFSRTDSDTTTETAPGKGKLRSG) is disordered. The segment covering 353–369 (GDSQSFSRTDSDTTTET) has biased composition (polar residues). A phosphoserine mark is found at Ser380, Ser396, and Ser398. Residues 417-440 (LGFIMAAFILCWIPYFIFFMVIAF) traverse the membrane as a helical segment. Positions 424 to 428 (FILCW) are important for agonist binding. Tyr431 lines the histamine pocket. An intrachain disulfide couples Cys441 to Cys444. Over 441-446 (CKNCCN) the chain is Extracellular. A helical transmembrane segment spans residues 447-469 (EHLHMFTIWLGYINSTLNPLIYP). Residues 470 to 487 (LCNENFKKTFKRILHIRS) are Cytoplasmic-facing.

The protein belongs to the G-protein coupled receptor 1 family. In terms of processing, phosphorylation at sites in the second and third cytoplasmic loops independently contribute to agonist-induced receptor down-regulation.

The protein localises to the cell membrane. Its function is as follows. G-protein-coupled receptor for histamine, a biogenic amine that functions as an immune modulator and a neurotransmitter. Through the H1 receptor, histamine mediates the contraction of smooth muscles and increases capillary permeability due to contraction of terminal venules. Also mediates neurotransmission in the central nervous system and thereby regulates circadian rhythms, emotional and locomotor activities as well as cognitive functions. The chain is Histamine H1 receptor from Homo sapiens (Human).